Consider the following 190-residue polypeptide: A-type ATP synthase subunit E (190 aa).

Belongs to the V-ATPase E subunit family. In terms of assembly, has multiple subunits with at least A(3), B(3), C, D, E, F, H, I and proteolipid K(x).

The protein resides in the cell membrane. In terms of biological role, component of the A-type ATP synthase that produces ATP from ADP in the presence of a proton gradient across the membrane. The protein is A-type ATP synthase subunit E of Pyrobaculum islandicum (strain DSM 4184 / JCM 9189 / GEO3).